The primary structure comprises 838 residues: Protein P (838 aa).

Residues Met-1–Gln-179 are terminal protein domain (TP). Positions Glu-180–Arg-341 are spacer. A disordered region spans residues Gly-219–Ser-245. The tract at residues Glu-342 to Gln-685 is polymerase/reverse transcriptase domain (RT). Positions Glu-352–Ile-595 constitute a Reverse transcriptase domain. Mg(2+)-binding residues include Asp-424, Asp-546, and Asp-547.

Belongs to the hepadnaviridae P protein family.

It catalyses the reaction DNA(n) + a 2'-deoxyribonucleoside 5'-triphosphate = DNA(n+1) + diphosphate. The catalysed reaction is Endonucleolytic cleavage to 5'-phosphomonoester.. Activated by host HSP70 and HSP40 in vitro to be able to bind the epsilon loop of the pgRNA. Because deletion of the RNase H region renders the protein partly chaperone-independent, the chaperones may be needed indirectly to relieve occlusion of the RNA-binding site by this domain. Inhibited by several reverse-transcriptase inhibitors: Lamivudine, Adefovir and Entecavir. In terms of biological role, multifunctional enzyme that converts the viral RNA genome into dsDNA in viral cytoplasmic capsids. This enzyme displays a DNA polymerase activity that can copy either DNA or RNA templates, and a ribonuclease H (RNase H) activity that cleaves the RNA strand of RNA-DNA heteroduplexes in a partially processive 3'- to 5'-endonucleasic mode. Neo-synthesized pregenomic RNA (pgRNA) are encapsidated together with the P protein, and reverse-transcribed inside the nucleocapsid. Initiation of reverse-transcription occurs first by binding the epsilon loop on the pgRNA genome, and is initiated by protein priming, thereby the 5'-end of (-)DNA is covalently linked to P protein. Partial (+)DNA is synthesized from the (-)DNA template and generates the relaxed circular DNA (RC-DNA) genome. After budding and infection, the RC-DNA migrates in the nucleus, and is converted into a plasmid-like covalently closed circular DNA (cccDNA). The activity of P protein does not seem to be necessary for cccDNA generation, and is presumably released from (+)DNA by host nuclear DNA repair machinery. This chain is Protein P, found in Hepatitis B virus genotype A2 subtype adw (isolate Japan/Nishioka/1983) (HBV-A).